The sequence spans 1118 residues: Error-prone DNA polymerase (1118 aa).

Residues glycine 1071–glutamine 1118 form a disordered region.

Belongs to the DNA polymerase type-C family. DnaE2 subfamily.

It localises to the cytoplasm. It catalyses the reaction DNA(n) + a 2'-deoxyribonucleoside 5'-triphosphate = DNA(n+1) + diphosphate. Functionally, DNA polymerase involved in damage-induced mutagenesis and translesion synthesis (TLS). It is not the major replicative DNA polymerase. The chain is Error-prone DNA polymerase from Mesorhizobium japonicum (strain LMG 29417 / CECT 9101 / MAFF 303099) (Mesorhizobium loti (strain MAFF 303099)).